The primary structure comprises 75 residues: Large ribosomal subunit protein uL24c (75 aa).

The protein belongs to the universal ribosomal protein uL24 family. Part of the 50S ribosomal subunit.

It localises to the plastid. The protein localises to the chloroplast. In terms of biological role, one of two assembly initiator proteins, it binds directly to the 5'-end of the 23S rRNA, where it nucleates assembly of the 50S subunit. The chain is Large ribosomal subunit protein uL24c (rpl24) from Cyanidioschyzon merolae (strain NIES-3377 / 10D) (Unicellular red alga).